A 775-amino-acid polypeptide reads, in one-letter code: MRPIKKSRSLKLPKSILEEIGESDSSARRGKRNHNLPHREKRKFARISRGKNGYENRKITEEGDSKSSELNDDYLDAHRKSSTKKKSSQNKQAKESKLLDPIAFQHKIALEEDDREIAHLEKMLGIKSKDKSAHSKIDKEFGWLLEDLDQEIDDIGVPGTEDPSYGHSEDSEVSDDTGDHGSVDELESEREGNSGEEEEEFHGFESNSDEFHQPETKPIRMDPLKPAVPSLPNANVGSKYVPPSLRKKLGGDKESEDALRLRRKLQGSLNKLSIANISSIIKEIEVLYMENSRHSVTSTITNLLLQTVMGRESMLDQLAIVYAALATALYRIVGNDFGAHLLQTLVERFLQLYKSKEKEPLSSHKETSNLIVFFVELYNFQLVSCVLVYDLIRLFLRSLTELNVEMLLKIVLNCGGQLRSDDPTSLQDIVTEMNLLLASADPSTISVRTKFMVESITNLKENKKTKVANASAQSKFEAVNQLKKFLGSLGNRSLNAREPLRVTLEDIEQIETKGRWWLVGASWNNVPSGDNTLSTEALQDKKKSEELTAHSKILQAAKKLRLNSTLRTSIFVALVGSEDYIDAWERVLKLHLKRNQLPEIAYVILHCVGNEKLYNPFYGLVALKCCTLQHNLKKSFQFSLWDFFNELQPDDDSEEREISMRRIVNLAKLYASLVIEAAQPLTILKHVDFMAINAQMQTFLLVFFTDIILGVKDDLQLVKIFENCKAEKNLSSKVDWFLKTYVRKNPLVDNSKKALFKSNLAMASAILQSISKEEI.

Composition is skewed to basic residues over residues 1–11 (MRPIKKSRSLK) and 28–49 (RRGKRNHNLPHREKRKFARISR). Disordered regions lie at residues 1–101 (MRPI…LLDP) and 152–253 (IDDI…GGDK). Composition is skewed to basic and acidic residues over residues 52–79 (NGYENRKITEEGDSKSSELNDDYLDAHR), 177–193 (TGDHGSVDELESEREGN), and 209–223 (DEFHQPETKPIRMDP). The 202-residue stretch at 262–463 (RRKLQGSLNK…ESITNLKENK (202 aa)) folds into the MIF4G domain. Residues 565 to 689 (TLRTSIFVAL…PLTILKHVDF (125 aa)) form the MI domain.

It belongs to the CWC22 family.

It localises to the nucleus. The protein resides in the nucleolus. In terms of biological role, involved in osmoregulatory glycerol response. This chain is Suppressor of glycerol defect protein 1 (sgd1), found in Schizosaccharomyces pombe (strain 972 / ATCC 24843) (Fission yeast).